The sequence spans 309 residues: MSIRIIPQDELEKSEKRTADMIPPLLFPRLKNLYNRRAERLRELAENNPLGDYLRFAALIAHAQEVVLYDHPLEMDLTARIKEANAQGKPPLDIHVLPRDKHWQKLLHSLIAELKPEMSGPALAVIENLEKASEQELEQMASALFESNFASVSSDKAPFIWAALSLYWAQMASLIPGKARAEYGEQRQYCPVCGSMPVSSMVQIGTTQGLRYLHCNLCETEWHVVRVKCSNCEQSRDLHYWSLDNEQASIKAESCGDCGTYLKILYQEKDPKVEAVADDLASLVLDARMEQEGFARSSINPFLFPGEGE.

It belongs to the FdhE family.

It localises to the cytoplasm. In terms of biological role, necessary for formate dehydrogenase activity. The polypeptide is Protein FdhE homolog (Citrobacter koseri (strain ATCC BAA-895 / CDC 4225-83 / SGSC4696)).